Reading from the N-terminus, the 367-residue chain is Flagellar P-ring protein (367 aa).

Positions 1 to 22 (MRRMLVIRWILAIHLIATQVFA) are cleaved as a signal peptide.

This sequence belongs to the FlgI family. In terms of assembly, the basal body constitutes a major portion of the flagellar organelle and consists of four rings (L,P,S, and M) mounted on a central rod.

Its subcellular location is the periplasm. The protein localises to the bacterial flagellum basal body. Assembles around the rod to form the L-ring and probably protects the motor/basal body from shearing forces during rotation. In Legionella pneumophila (strain Corby), this protein is Flagellar P-ring protein.